The following is a 41-amino-acid chain: Pi-stichotoxin-Hcr5b (41 aa).

Cystine bridges form between C4–C37, C6–C30, and C20–C38.

Belongs to the sea anemone type 3 (BDS) potassium channel toxin family.

The protein resides in the secreted. It localises to the nematocyst. In terms of biological role, remarkably non-selective toxin, with activity on many different ion channels. Weakly and reversibly inhibits rat and human homomeric ASIC1 (isoform ASIC1a) (IC(50)=4.8 uM, and IC(50)=14.6 uM), and ASIC3 (IC(50)=15.9 uM). Molecular modeling interaction with ASIC1a suggests that this peptide hinders the collapse of acidic pockets and stabilizes nonconducting channels state. It activates several potassium channels including Kv1.1/KCNA1, Kv1.2/KCNA2, and drosophila Shaker IR. It moderately to potently inhibits potassium channels including Kv1.3/KCNA3, Kv1.4/KCNA4, Kv1.5/KCNA5, Kv1.6/KCNA6, Kv2.1/KCNB1, Kv4.2/KCND2, Kv7.1/KCNQ1, Kv7.2/Kv7.3 (KCNQ2/KCNQ3), Kv7.4/KCNQ4, hERG/KCNH2, and C.elegans QKT1. On sodium channels, it moderately to potently inhibits Nav1.1/SCN1A, Nav1.2/SCN2A, Nav1.3/SCN3A, Nav1.4/SCN4A, Nav1.5/SCN5A, Nav1.6/SCN8A, Nav1.7/SCN9A, Nav1.8/SCN10A, and B.germanica BgNav. It also moderately to potently inhibits Cav3.1/CACNA1G, Cav3.2/CACNA1H, and Cav3.3/CACNA1I. Significant shifts in the voltage-current relationship are observed on Kv and Nav, depending on the channel isoform, whereas the toxin does not seem to modulate the voltage-sensor domains of Cav channels, acting mainly as a pore blocker. Does not activate nicotinic acetylcholine receptors (nAChR), but potentiates ACh-elicited current of human alpha-7/CHRNA7 nAChR. Is also able to bind T.californica muscle-type nAChRs. In vivo, causes an excitatory effect in mice behavior. Also shows antihyperalgesic and analgesic activity in the acid-induced muscle pain mice model, and weak anti-inflammatory effect in models of acute local inflammation. The sequence is that of Pi-stichotoxin-Hcr5b from Radianthus crispa (Leathery sea anemone).